The primary structure comprises 327 residues: Zinc transport protein ZntB (327 aa).

Topologically, residues 1 to 273 are cytoplasmic; sequence MEAIKGSDVN…ARRTYTMSLM (273 aa). The helical transmembrane segment at 274-294 threads the bilayer; sequence AMVFLPSTFLTGLFGVNLGGI. The Periplasmic portion of the chain corresponds to 295 to 300; the sequence is PGGGWR. A helical membrane pass occupies residues 301–321; sequence FGFSLFCILLVVLIGGVTLWL. Residues 322 to 327 lie on the Cytoplasmic side of the membrane; it reads HRSKWL.

This sequence belongs to the CorA metal ion transporter (MIT) (TC 1.A.35) family.

It is found in the cell inner membrane. The enzyme catalyses Zn(2+)(out) + H(+)(out) = Zn(2+)(in) + H(+)(in). Its function is as follows. Zinc transporter. Acts as a Zn(2+):proton symporter, which likely mediates zinc ion uptake. The chain is Zinc transport protein ZntB from Salmonella choleraesuis (strain SC-B67).